The sequence spans 213 residues: Thymidylate kinase (213 aa).

An ATP-binding site is contributed by 9–16 (GIEGCGKT).

This sequence belongs to the thymidylate kinase family.

The catalysed reaction is dTMP + ATP = dTDP + ADP. Functionally, phosphorylation of dTMP to form dTDP in both de novo and salvage pathways of dTTP synthesis. This Geobacter sulfurreducens (strain ATCC 51573 / DSM 12127 / PCA) protein is Thymidylate kinase.